A 66-amino-acid polypeptide reads, in one-letter code: Large ribosomal subunit protein bL35 (66 aa).

Residues Ser19–Arg45 form a disordered region. A compositionally biased stretch (basic residues) spans Thr28–Arg45.

Belongs to the bacterial ribosomal protein bL35 family.

This chain is Large ribosomal subunit protein bL35, found in Anaplasma phagocytophilum (strain HZ).